The following is a 1043-amino-acid chain: Liprin-alpha-4 (1043 aa).

Coiled coils occupy residues glutamate 24–glycine 332 and isoleucine 426–serine 470. Positions serine 498–isoleucine 617 are disordered. Serine 500 is subject to Phosphoserine. Positions glycine 505 to alanine 516 are enriched in polar residues. The residue at position 541 (serine 541) is a Phosphoserine. Positions serine 544–isoleucine 555 are enriched in basic and acidic residues. A compositionally biased stretch (low complexity) spans glutamine 590–aspartate 602. SAM domains are found at residues tryptophan 688–leucine 754, asparagine 803–leucine 867, and tryptophan 891–leucine 960. The stretch at leucine 864–valine 890 forms a coiled coil.

This sequence belongs to the liprin family. Liprin-alpha subfamily. As to quaternary structure, forms homodimers and heterodimers with liprins-alpha and liprins-beta. Interacts with the second PTPase domain of PTPRD, PTPRF and PTPRS. Interacts with RIMS1 and RIMS2. Interacts with GIT1 and GIT2. Interacts with GRIP1. Interacts with KIF1A.

The protein resides in the cytoplasm. Its subcellular location is the cell surface. Functionally, may regulate the disassembly of focal adhesions. May localize receptor-like tyrosine phosphatases type 2A at specific sites on the plasma membrane, possibly regulating their interaction with the extracellular environment and their association with substrates. This chain is Liprin-alpha-4 (Ppfia4), found in Rattus norvegicus (Rat).